The chain runs to 902 residues: Ephrin type-B receptor 1-B (902 aa).

Positions His1 to Gln119 constitute an Eph LBD domain. The Extracellular portion of the chain corresponds to His1–Leu459. Fibronectin type-III domains are found at residues Val240–Ala350 and Ala351–Asp448. N-linked (GlcNAc...) asparagine glycans are attached at residues Asn252, Asn344, and Asn398. A helical membrane pass occupies residues Ile460 to Val480. At Cys481–Ala902 the chain is on the cytoplasmic side. In terms of domain architecture, Protein kinase spans Val537–Ile800. ATP-binding positions include Ile543–Val551 and Lys569. Residue Asp662 is the Proton acceptor of the active site. One can recognise an SAM domain in the interval Ser829 to Gln893. The PDZ-binding motif lies at Ser900–Ala902.

The protein belongs to the protein kinase superfamily. Tyr protein kinase family. Ephrin receptor subfamily. In terms of assembly, heterotetramer upon binding of the ligand. The heterotetramer is composed of an ephrin dimer and a receptor dimer. Oligomerization is probably required to induce biological responses. Post-translationally, phosphorylated. Autophosphorylation is stimulated by ligands. As to expression, expressed in the embryo in the brain and spinal cord and in the first and fourth visceral arches. Most abundant in adult brain, with lower levels in eye, heart, ovary, oviduct, lung and pharynx.

The protein localises to the cell membrane. The protein resides in the early endosome membrane. It localises to the cell projection. It is found in the dendrite. It carries out the reaction L-tyrosyl-[protein] + ATP = O-phospho-L-tyrosyl-[protein] + ADP + H(+). Functionally, receptor tyrosine kinase which binds promiscuously transmembrane ephrin-B family ligands residing on adjacent cells, leading to contact-dependent bidirectional signaling into neighboring cells. The signaling pathway downstream of the receptor is referred to as forward signaling while the signaling pathway downstream of the ephrin ligand is referred to as reverse signaling. May play a role in axon guidance during nervous system development. May also play an important redundant role with other ephrin-B receptors in development and maturation of dendritic spines and synapse formation. More generally, may play a role in targeted cell migration and adhesion. Upon activation by ephrin-B ligands activates the MAPK/ERK and the JNK signaling cascades to regulate cell migration and adhesion respectively. In Xenopus laevis (African clawed frog), this protein is Ephrin type-B receptor 1-B (ephb1-b).